A 445-amino-acid polypeptide reads, in one-letter code: MIKIKRGLDLPISGAPEQRIEAARPVRSVALIGFDYHGMKPTMAVQVGDRVKLGQALFTDKKNPSVSYTAPGAGVVSAIHRGEKRVLQSVVIDLDGDEQLEFARYPADQLATLSAEQVRDNLLQSGLWTALRTRPFSKVPDPESSPSSIFVTAIDTQPLAADPQVVIAEQGEAFQAGLTVLGRLARVFLCKAEGVSLPGEALSGVTAQAFAGPHPAGLPGTHIHFLDPVGAGKSVWNLNYQDVIAIGKLFTTGQLWTERVIALAGPVVEKPRLVRTRLGANLDELAAGQLQPGNNRLISGSVLGGRTAHGAYAYLGRYHLQLSCLKEGDQREFLHYLRAGVEKHSLLNVFVSRLLGGKRFAFTTSTNGSPRAMVPVGNYEAVMPLDILPTQLLRYLIVGDTEMAQKLGALELDEEDLALCSYVCAGKYEYGPILRDNLARIEQEG.

This sequence belongs to the NqrA family. As to quaternary structure, composed of six subunits; NqrA, NqrB, NqrC, NqrD, NqrE and NqrF.

The enzyme catalyses a ubiquinone + n Na(+)(in) + NADH + H(+) = a ubiquinol + n Na(+)(out) + NAD(+). Functionally, NQR complex catalyzes the reduction of ubiquinone-1 to ubiquinol by two successive reactions, coupled with the transport of Na(+) ions from the cytoplasm to the periplasm. NqrA to NqrE are probably involved in the second step, the conversion of ubisemiquinone to ubiquinol. This chain is Na(+)-translocating NADH-quinone reductase subunit A, found in Pseudomonas aeruginosa (strain UCBPP-PA14).